A 316-amino-acid chain; its full sequence is Cytochrome c biogenesis protein CcsA (316 aa).

7 consecutive transmembrane segments (helical) span residues 15–35 (FSIC…TTIL), 44–64 (GIIT…IYSG), 71–91 (LYES…VAYL), 142–162 (MILS…LLVI), 220–240 (VISL…VWAN), 247–267 (WSWD…AIYL), and 281–301 (AIVA…VNLL).

This sequence belongs to the CcmF/CycK/Ccl1/NrfE/CcsA family. As to quaternary structure, may interact with Ccs1.

The protein resides in the plastid. The protein localises to the chloroplast thylakoid membrane. Functionally, required during biogenesis of c-type cytochromes (cytochrome c6 and cytochrome f) at the step of heme attachment. This Trachelium caeruleum (Blue throatwort) protein is Cytochrome c biogenesis protein CcsA.